A 256-amino-acid polypeptide reads, in one-letter code: Undecaprenyl-diphosphatase (256 aa).

Helical transmembrane passes span 8 to 28 (VLGIVEGISEFLPISSTGHLI), 41 to 61 (FVKSFEISIQLGSILAVVVLY), 75 to 95 (IIAAFIPTGIIGFLLYKLIKG), 96 to 116 (FLIGNDLVVVVSLILGGIILI), 175 to 195 (AEFSFLLAIPTMFAATTYDLI), 208 to 228 (ILIIGFITSFITALIVVKWFL), and 236 to 256 (LKIFGFYRILIGLVYAAFFLF).

The protein belongs to the UppP family.

The protein resides in the cell inner membrane. The enzyme catalyses di-trans,octa-cis-undecaprenyl diphosphate + H2O = di-trans,octa-cis-undecaprenyl phosphate + phosphate + H(+). In terms of biological role, catalyzes the dephosphorylation of undecaprenyl diphosphate (UPP). Confers resistance to bacitracin. This chain is Undecaprenyl-diphosphatase, found in Aquifex aeolicus (strain VF5).